Reading from the N-terminus, the 1545-residue chain is Immunoglobulin A1 protease autotransporter (1545 aa).

A signal peptide spans 1–25 (MLNKKFKLNFIALTVAYALTPYTEA). Positions 26-336 (ALVRDDVDYQ…NIYKPEFAEK (311 aa)) constitute a Peptidase S6 domain. S292 is an active-site residue. Polar residues predominate over residues 995–1019 (TVDTTNITTPNNIQADVPSVPSNNE). The interval 995–1246 (TVDTTNITTP…NVEPATTSSN (252 aa)) is disordered. Positions 1036-1046 (TPSETTETVAE) are enriched in low complexity. Residues 1048-1060 (SKQESKTVEKNEQ) show a composition bias toward basic and acidic residues. A compositionally biased stretch (polar residues) spans 1080 to 1094 (VKANTQTNEVAQSGS). A compositionally biased stretch (basic and acidic residues) spans 1095-1125 (ETKETQTTETKETATVEKEEKAKVETEKTQE). 2 stretches are compositionally biased toward polar residues: residues 1129 to 1145 (VTSQVSPKQEQSETVQP) and 1161 to 1222 (EPQS…SSNK). Positions 1293 to 1545 (NNEGQYNVWV…TAELKLSFSF (253 aa)) constitute an Autotransporter domain.

The protein localises to the periplasm. It localises to the secreted. Its subcellular location is the cell surface. It is found in the cell outer membrane. The enzyme catalyses Cleavage of immunoglobulin A molecules at certain Pro-|-Xaa bonds in the hinge region. No small molecule substrates are known.. Functionally, virulence factor; cleaves host immunoglobulin A producing intact Fc and Fab fragments. The sequence is that of Immunoglobulin A1 protease autotransporter (iga) from Haemophilus influenzae.